The sequence spans 182 residues: MIDKEKIIEGIKLFLEGIGEDITREGIKETPERVAKMWEEFEKERSFDFKLFEEYSNYSEMIIVKDIPFYSMCEHHLLPFFGKAHIAYIPNKKICGLSKLVRTVRAMALKPQVQERLTEEIADIVQKELEPMGVGVVIEAEHLCMSMRGVRSPGHCTVTSSLRGNFLSDIRTKEEFFKLIRQ.

Residues cysteine 73, histidine 76, and cysteine 144 each coordinate Zn(2+).

It belongs to the GTP cyclohydrolase I family. In terms of assembly, homomer.

The enzyme catalyses GTP + H2O = 7,8-dihydroneopterin 3'-triphosphate + formate + H(+). The protein operates within cofactor biosynthesis; 7,8-dihydroneopterin triphosphate biosynthesis; 7,8-dihydroneopterin triphosphate from GTP: step 1/1. The sequence is that of GTP cyclohydrolase 1 from Hydrogenobaculum sp. (strain Y04AAS1).